The following is a 94-amino-acid chain: Large ribosomal subunit protein bL31 (94 aa).

Residues 65–94 (YGMADSENDSTDKKKTTNEKKVSDSPSKES) form a disordered region. A compositionally biased stretch (basic and acidic residues) spans 74–94 (STDKKKTTNEKKVSDSPSKES).

The protein belongs to the bacterial ribosomal protein bL31 family. Type A subfamily. In terms of assembly, part of the 50S ribosomal subunit.

Its function is as follows. Binds the 23S rRNA. This Prochlorococcus marinus (strain MIT 9211) protein is Large ribosomal subunit protein bL31.